Consider the following 197-residue polypeptide: Chromophore lyase CpcT/CpeT (197 aa).

The protein belongs to the CpcT/CpeT biliprotein lyase family.

Functionally, covalently attaches a chromophore to Cys residue(s) of phycobiliproteins. In Synechococcus sp. (strain WH8103), this protein is Chromophore lyase CpcT/CpeT.